Reading from the N-terminus, the 355-residue chain is Probable butyrate kinase (355 aa).

The protein belongs to the acetokinase family.

The protein localises to the cytoplasm. It catalyses the reaction butanoate + ATP = butanoyl phosphate + ADP. The sequence is that of Probable butyrate kinase from Listeria monocytogenes serotype 4a (strain HCC23).